A 576-amino-acid chain; its full sequence is Sulfite reductase [NADPH] hemoprotein beta-component (576 aa).

[4Fe-4S] cluster-binding residues include Cys435, Cys441, Cys480, and Cys484. Cys484 provides a ligand contact to siroheme.

Belongs to the nitrite and sulfite reductase 4Fe-4S domain family. In terms of assembly, alpha(8)-beta(8). The alpha component is a flavoprotein, the beta component is a hemoprotein. Requires siroheme as cofactor. [4Fe-4S] cluster serves as cofactor.

The catalysed reaction is hydrogen sulfide + 3 NADP(+) + 3 H2O = sulfite + 3 NADPH + 4 H(+). Its pathway is sulfur metabolism; hydrogen sulfide biosynthesis; hydrogen sulfide from sulfite (NADPH route): step 1/1. Component of the sulfite reductase complex that catalyzes the 6-electron reduction of sulfite to sulfide. This is one of several activities required for the biosynthesis of L-cysteine from sulfate. This is Sulfite reductase [NADPH] hemoprotein beta-component from Proteus mirabilis (strain HI4320).